Reading from the N-terminus, the 298-residue chain is Glycine--tRNA ligase alpha subunit (298 aa).

The protein belongs to the class-II aminoacyl-tRNA synthetase family. Tetramer of two alpha and two beta subunits.

Its subcellular location is the cytoplasm. It catalyses the reaction tRNA(Gly) + glycine + ATP = glycyl-tRNA(Gly) + AMP + diphosphate. This Helicobacter pylori (strain G27) protein is Glycine--tRNA ligase alpha subunit.